The chain runs to 212 residues: Cytochrome c biogenesis ATP-binding export protein CcmA (212 aa).

The ABC transporter domain maps to 8–212; it reads LQATALACER…RSIDLAKGSA (205 aa). 40-47 is a binding site for ATP; it reads GPNGSGKT.

The protein belongs to the ABC transporter superfamily. CcmA exporter (TC 3.A.1.107) family. As to quaternary structure, the complex is composed of two ATP-binding proteins (CcmA) and two transmembrane proteins (CcmB).

It is found in the cell inner membrane. It catalyses the reaction heme b(in) + ATP + H2O = heme b(out) + ADP + phosphate + H(+). Part of the ABC transporter complex CcmAB involved in the biogenesis of c-type cytochromes; once thought to export heme, this seems not to be the case, but its exact role is uncertain. Responsible for energy coupling to the transport system. The protein is Cytochrome c biogenesis ATP-binding export protein CcmA of Pseudomonas syringae pv. tomato (strain ATCC BAA-871 / DC3000).